Consider the following 411-residue polypeptide: Inhibin beta B chain (411 aa).

The N-terminal stretch at 1 to 28 (MDGLPGRALGAACLLLLAAGWLGPEAWG) is a signal peptide. Positions 27–69 (WGSPTPPPSPAAPPPPPPPGAPGGSQDTCTSCGGGGGGFRRPE) are disordered. The propeptide occupies 29 to 296 (SPTPPPSPAA…GDSRHRIRKR (268 aa)). A compositionally biased stretch (pro residues) spans 30 to 47 (PTPPPSPAAPPPPPPPGA). N-linked (GlcNAc...) asparagine glycosylation occurs at Asn97. 4 disulfide bridges follow: Cys300–Cys308, Cys307–Cys376, Cys336–Cys408, and Cys340–Cys410.

Belongs to the TGF-beta family. In terms of assembly, dimeric, linked by one or more disulfide bonds. Inhibin B is a dimer of alpha and beta-B. Activin B is a homodimer of beta-B. Activin AB is a dimer of beta-A and beta-B. Interacts with FST and FSTL3. As to expression, alpha- and beta-B subunits are the predominant forms found in rat testis. Also expressed in ovary.

The protein localises to the secreted. Its function is as follows. Inhibins and activins inhibit and activate, respectively, the secretion of follitropin by the pituitary gland. Inhibins/activins are involved in regulating a number of diverse functions such as hypothalamic and pituitary hormone secretion, gonadal hormone secretion, germ cell development and maturation, erythroid differentiation, insulin secretion, nerve cell survival, embryonic axial development or bone growth, depending on their subunit composition. Inhibins appear to oppose the functions of activins. In terms of biological role, activin B is a dimer of alpha and beta-B that plays a role in several essential biological processes including embryonic development, stem cell maintenance and differentiation, haematopoiesis, cell proliferation and wound healing. Signals through type I receptor ACVR1C, abundantly expressed in pancreatic beta cells, and type II receptors like ACVR2A. Upon ligand binding, these receptors phosphorylate intracellular signaling mediators SMAD2 and SMAD3, which form a complex with SMAD4, translocate to the nucleus, and regulate gene expression. Plays a crucial role in the induction of hepcidin by inflammation through activation of ACVR1C and subsequent phosphorylation of SMAD1/5/8. Regulates adipocyte lipid metabolism by decreasing non-esterified fatty acids and glycerol release and increases intracellular triglyceride content. Stimulates wound healing by promoting cell migration and hair follicle regeneration through the JNK and ERK signaling pathways downstream of RHOA. Functionally, inhibin B is a dimer of alpha and beta-B that plays a crucial role in the regulation of the reproductive system by inhibiting the secretion of follicle-stimulating hormone (FSH) from the anterior pituitary gland. Thereby, maintains reproductive homeostasis in both males and females. Acts as a more potent suppressor of FSH release than inhibin A. Functions as competitive receptor antagonist binding activin type II receptors with high affinity in the presence of the TGF-beta type III coreceptor/TGFBR3L. In Rattus norvegicus (Rat), this protein is Inhibin beta B chain (Inhbb).